A 375-amino-acid polypeptide reads, in one-letter code: Probable aminomethyltransferase (375 aa).

The protein belongs to the GcvT family. In terms of assembly, the glycine cleavage system is composed of four proteins: P, T, L and H.

It carries out the reaction N(6)-[(R)-S(8)-aminomethyldihydrolipoyl]-L-lysyl-[protein] + (6S)-5,6,7,8-tetrahydrofolate = N(6)-[(R)-dihydrolipoyl]-L-lysyl-[protein] + (6R)-5,10-methylene-5,6,7,8-tetrahydrofolate + NH4(+). Its function is as follows. The glycine cleavage system catalyzes the degradation of glycine. The sequence is that of Probable aminomethyltransferase from Aeropyrum pernix (strain ATCC 700893 / DSM 11879 / JCM 9820 / NBRC 100138 / K1).